The primary structure comprises 319 residues: N-acetyllactosaminide alpha-1,3-galactosyltransferase-like 1 (319 aa).

Residues 1–6 (MQYKKE) lie on the Cytoplasmic side of the membrane. The chain crosses the membrane as a helical; Signal-anchor for type II membrane protein span at residues 7–26 (ALLLMLFAVLLALTQRFSYS). Topologically, residues 27-319 (RTKDHLQKMY…IKHIKIAWKP (293 aa)) are lumenal. Residues Asn-89 and Asn-101 are each glycosylated (N-linked (GlcNAc...) asparagine). Residues 97 to 102 (FATGNF), 188 to 190 (AVN), and 210 to 213 (HAWW) contribute to the substrate site. The active-site Nucleophile is Glu-278.

This sequence belongs to the glycosyltransferase 6 family. Requires Mn(2+) as cofactor.

It is found in the golgi apparatus. The protein localises to the golgi stack membrane. It catalyses the reaction a beta-D-galactosyl-(1-&gt;4)-N-acetyl-beta-D-glucosaminyl derivative + UDP-alpha-D-galactose = an alpha-D-galactosyl-(1-&gt;3)-beta-D-galactosyl-(1-&gt;4)-N-acetyl-beta-D-glucosaminyl derivative + UDP + H(+). Its pathway is protein modification; protein glycosylation. In terms of biological role, synthesizes the galactose-alpha(1,3)-galactose group by catalyzing the transfer of a galactose residue, with an alpha-1,3 linkage, on terminal lactosaminide (Gal-beta-1,4-GlcNAc-R) disaccharide borne by a glycoprotein or a glycolipid. This is N-acetyllactosaminide alpha-1,3-galactosyltransferase-like 1 (Ggta1l1) from Mus musculus (Mouse).